We begin with the raw amino-acid sequence, 420 residues long: ATP phosphoribosyltransferase regulatory subunit (420 aa).

This sequence belongs to the class-II aminoacyl-tRNA synthetase family. HisZ subfamily. Heteromultimer composed of HisG and HisZ subunits.

The protein resides in the cytoplasm. The protein operates within amino-acid biosynthesis; L-histidine biosynthesis; L-histidine from 5-phospho-alpha-D-ribose 1-diphosphate: step 1/9. Functionally, required for the first step of histidine biosynthesis. May allow the feedback regulation of ATP phosphoribosyltransferase activity by histidine. The protein is ATP phosphoribosyltransferase regulatory subunit of Bacillus thuringiensis subsp. konkukian (strain 97-27).